The sequence spans 212 residues: Dephospho-CoA kinase (212 aa).

One can recognise a DPCK domain in the interval 6–211; the sequence is RLGLTGGIGS…LSCQPLSPNQ (206 aa). 14–19 provides a ligand contact to ATP; it reads GSGKST.

The protein belongs to the CoaE family.

Its subcellular location is the cytoplasm. The catalysed reaction is 3'-dephospho-CoA + ATP = ADP + CoA + H(+). It participates in cofactor biosynthesis; coenzyme A biosynthesis; CoA from (R)-pantothenate: step 5/5. Functionally, catalyzes the phosphorylation of the 3'-hydroxyl group of dephosphocoenzyme A to form coenzyme A. The polypeptide is Dephospho-CoA kinase (Albidiferax ferrireducens (strain ATCC BAA-621 / DSM 15236 / T118) (Rhodoferax ferrireducens)).